A 274-amino-acid chain; its full sequence is Large ribosomal subunit protein uL2 (274 aa).

Residues 224–274 (AMNPVDHPHGGGEGRTGEGQVPVSPWNTMTKGYRTRSNKRTQTFIVSRRKK) form a disordered region. A compositionally biased stretch (basic and acidic residues) spans 229 to 239 (DHPHGGGEGRT).

It belongs to the universal ribosomal protein uL2 family. As to quaternary structure, part of the 50S ribosomal subunit. Forms a bridge to the 30S subunit in the 70S ribosome.

In terms of biological role, one of the primary rRNA binding proteins. Required for association of the 30S and 50S subunits to form the 70S ribosome, for tRNA binding and peptide bond formation. It has been suggested to have peptidyltransferase activity; this is somewhat controversial. Makes several contacts with the 16S rRNA in the 70S ribosome. The protein is Large ribosomal subunit protein uL2 of Methylibium petroleiphilum (strain ATCC BAA-1232 / LMG 22953 / PM1).